Here is a 310-residue protein sequence, read N- to C-terminus: tRNA uridine(34) hydroxylase (310 aa).

Residues Ala123 to Ser217 form the Rhodanese domain. Cys177 acts as the Cysteine persulfide intermediate in catalysis.

The protein belongs to the TrhO family.

It catalyses the reaction uridine(34) in tRNA + AH2 + O2 = 5-hydroxyuridine(34) in tRNA + A + H2O. Catalyzes oxygen-dependent 5-hydroxyuridine (ho5U) modification at position 34 in tRNAs. In Acaryochloris marina (strain MBIC 11017), this protein is tRNA uridine(34) hydroxylase.